Reading from the N-terminus, the 692-residue chain is Paramyosin (692 aa).

A nonhelical region region spans residues 1–15 (MNKKRDSELAKLRKL). Positions 16–692 (LEDVHIESEE…DHRVKELLLQ (677 aa)) form a coiled coil. Positions 26-57 (TAHHLRQKHQAAIQEMQDQLDQLQKAKNKSDK) are disordered.

The protein belongs to the paramyosin family. Homodimer.

It is found in the cytoplasm. The protein resides in the myofibril. Its function is as follows. Paramyosin is a major structural component of many thick filaments isolated from invertebrate muscles. The chain is Paramyosin from Dermatophagoides farinae (American house dust mite).